Reading from the N-terminus, the 342-residue chain is MKIAVLLSGGVDSSYSAYSLKEQGHELVGVYLKLHASEKKHDLYIKNAQKACEFLGIPLEVLDFQKDFKSTVYDEFISAYEEGQTPNPCTLCNPLMKFGLALDHALKLGCEKIATGHYARVKEIDKVSYIQEALDKTKDQSYFLYALEHEVIAKLVFPLGDLLKKDIKPLALNAMPFLGTLETYKESQEICFVEKSYIDTLKKHVEVEKEGVVKNLQGEIIGTHKGYMQYTIGKRKGFSIKGALEPHFVVGIDAKKNELIVGKKEDLATHSLKAKNKSLMKDFKSGEYFIKARYRSVPTKAFVSLKDEMIEVGFKESFYGVAKGQALVVYKDDILLGGGVIV.

ATP contacts are provided by residues 6 to 13 (LLSGGVDS) and Leu-32. Catalysis depends on Cys-92, which acts as the Nucleophile. The cysteines at positions 92 and 191 are disulfide-linked. ATP is bound at residue Gly-116. Residues 138 to 140 (KDQ) form an interaction with tRNA region. Cys-191 functions as the Cysteine persulfide intermediate in the catalytic mechanism. An interaction with tRNA region spans residues 293 to 294 (RY).

This sequence belongs to the MnmA/TRMU family.

The protein localises to the cytoplasm. The enzyme catalyses S-sulfanyl-L-cysteinyl-[protein] + uridine(34) in tRNA + AH2 + ATP = 2-thiouridine(34) in tRNA + L-cysteinyl-[protein] + A + AMP + diphosphate + H(+). Functionally, catalyzes the 2-thiolation of uridine at the wobble position (U34) of tRNA, leading to the formation of s(2)U34. This Helicobacter pylori (strain G27) protein is tRNA-specific 2-thiouridylase MnmA.